Consider the following 468-residue polypeptide: Aldehyde dehydrogenase family 3 member B1 (468 aa).

M1 carries the post-translational modification N-acetylmethionine. Position 188-193 (188-193 (GNTYVG)) interacts with NAD(+). Catalysis depends on residues E210 and C244. Residues C462 and C463 are each lipidated (S-palmitoyl cysteine). Residue C465 is modified to Cysteine methyl ester. The S-geranylgeranyl cysteine moiety is linked to residue C465. The propeptide at 466–468 (TLL) is removed in mature form.

This sequence belongs to the aldehyde dehydrogenase family. In terms of processing, dually lipidated in the C-terminus; prenylation occurs prior to, and is a prerequisite for palmitoylation. It is also required for activity towards long-chain substrates.

The protein localises to the cell membrane. The enzyme catalyses an aldehyde + NAD(+) + H2O = a carboxylate + NADH + 2 H(+). It catalyses the reaction a long-chain fatty aldehyde + NAD(+) + H2O = a long-chain fatty acid + NADH + 2 H(+). The catalysed reaction is a medium-chain fatty aldehyde + NAD(+) + H2O = a medium-chain fatty acid + NADH + 2 H(+). It carries out the reaction octanal + NAD(+) + H2O = octanoate + NADH + 2 H(+). The enzyme catalyses nonanal + NAD(+) + H2O = nonanoate + NADH + 2 H(+). It catalyses the reaction hexadecanoate + NADH + 2 H(+) = hexadecanal + NAD(+) + H2O. The catalysed reaction is (2E)-octenal + NAD(+) + H2O = (2E)-octenoate + NADH + 2 H(+). It carries out the reaction (E)-non-2-enal + NAD(+) + H2O = (E)-non-2-enoate + NADH + 2 H(+). The enzyme catalyses (E)-4-hydroxynon-2-enal + NAD(+) + H2O = (E)-4-hydroxynon-2-enoate + NADH + 2 H(+). It catalyses the reaction (2E)-hexadecenal + NAD(+) + H2O = (E)-hexadec-2-enoate + NADH + 2 H(+). The catalysed reaction is benzaldehyde + NAD(+) + H2O = benzoate + NADH + 2 H(+). It carries out the reaction an aldehyde + NADP(+) + H2O = a carboxylate + NADPH + 2 H(+). The enzyme catalyses a medium-chain fatty aldehyde + NADP(+) + H2O = a medium-chain fatty acid + NADPH + 2 H(+). It catalyses the reaction hexanal + NADP(+) + H2O = hexanoate + NADPH + 2 H(+). The catalysed reaction is octanal + NADP(+) + H2O = octanoate + NADPH + 2 H(+). It carries out the reaction nonanal + NADP(+) + H2O = nonanoate + NADPH + 2 H(+). The enzyme catalyses (2E)-octenal + NADP(+) + H2O = (2E)-octenoate + NADPH + 2 H(+). It catalyses the reaction (E)-non-2-enal + NADP(+) + H2O = (E)-non-2-enoate + NADPH + 2 H(+). The catalysed reaction is (E)-4-hydroxynon-2-enal + NADP(+) + H2O = (E)-4-hydroxynon-2-enoate + NADPH + 2 H(+). It carries out the reaction benzaldehyde + NADP(+) + H2O = benzoate + NADPH + 2 H(+). It participates in alcohol metabolism; ethanol degradation; acetate from ethanol: step 2/2. Oxidizes medium and long chain saturated and unsaturated fatty aldehydes generated in the plasma membrane into non-toxic fatty acids. May have a protective role against the cytotoxicity induced by lipid peroxidation. Short-chain fatty aldehydes are not good substrates. Can use both NADP(+) and NAD(+) as electron acceptor in vitro, however in vivo preference will depend on their tissue levels. Low activity towards acetaldehyde and 3,4-dihydroxyphenylacetaldehyde. Able to metabolize aromatic aldehydes such as benzaldehyde to their acid form. In Rattus norvegicus (Rat), this protein is Aldehyde dehydrogenase family 3 member B1 (Aldh3b1).